Consider the following 1128-residue polypeptide: Glutamate receptor-interacting protein 1 (1128 aa).

Position 43 is a phosphoserine (S43). 6 consecutive PDZ domains span residues 53 to 136, 150 to 238, 252 to 336, 472 to 561, 573 to 658, and 673 to 755; these read VVEL…EYEL, TVEV…EYDV, LVEV…LPHH, EVVL…EFDV, HVKL…RKDE, and TVEL…KKQT. Disordered regions lie at residues 754–798 and 935–981; these read QTDA…YPST and MSLN…GRKS. The span at 944-974 shows a compositional bias: polar residues; that stretch reads PRSQLGRQASFQERSSSRPHYSQTTRSNTLP. The PDZ 7 domain occupies 1004-1086; that stretch reads KVTLYKDSDM…KLDLVISRNP (83 aa). The span at 1093–1115 shows a compositional bias: polar residues; it reads IDQQSLPGDWSEQNSAFFQQPSH. The disordered stretch occupies residues 1093 to 1128; sequence IDQQSLPGDWSEQNSAFFQQPSHGGNLETREPTNTL.

In terms of assembly, interacts with EPHA7, EPHB2, KIF5A, KIF5B, KIF5C, GRIA2, GRIA3, GRIPAP1/GRASP1, PPFIA1, PPFIA4, FRAS1, PLCD4, PTPRF and liprins-alpha. Can form homomultimers or heteromultimers with GRIP2. Forms a ternary complex with GRIA2 and CSPG4. Interacts with ATAD1 in an ATP-dependent manner. ATAD1-catalyzed ATP hydrolysis disrupts binding to ATAD1 and to GRIA2 and leads to AMPAR complex disassembly. Interacts with EFNB1, EFNB3 and the C-terminal tail of PRLHR. Interacts with SLC30A9. Interacts with BUD23. Forms a complex with NSG1, GRIA2 and STX12; controls the intracellular fate of AMPAR and the endosomal sorting of the GRIA2 subunit toward recycling and membrane targeting. Interacts with NSG1.

The protein localises to the cytoplasmic vesicle. The protein resides in the perikaryon. It localises to the cell projection. Its subcellular location is the dendrite. It is found in the cytoplasm. The protein localises to the endomembrane system. The protein resides in the postsynaptic cell membrane. It localises to the postsynaptic density. Its subcellular location is the endoplasmic reticulum membrane. May play a role as a localized scaffold for the assembly of a multiprotein signaling complex and as mediator of the trafficking of its binding partners at specific subcellular location in neurons. Through complex formation with NSG1, GRIA2 and STX12 controls the intracellular fate of AMPAR and the endosomal sorting of the GRIA2 subunit toward recycling and membrane targeting. This chain is Glutamate receptor-interacting protein 1 (GRIP1), found in Homo sapiens (Human).